The chain runs to 166 residues: Myosin regulatory light chain 2, ventricular/cardiac muscle isoform (166 aa).

A N,N,N-trimethylalanine modification is found at alanine 2. Serine 14 and serine 15 each carry phosphoserine; by MLCK. Serine 19 bears the Phosphoserine mark. EF-hand domains are found at residues 24-59 (TQIQEFKEAFTIMDQNRDGFIDKNDLRDTFAALGRV), 94-129 (DPEETILNAFKVFDPEGKGSLKADYVREMLTTQAER), and 130-165 (FSKEEIDQMFAAFPPDVTGNLDYKNLVHIITHGEEK). The Ca(2+) site is built by aspartate 37, asparagine 39, aspartate 41, and aspartate 48. Residue threonine 52 is modified to Phosphothreonine.

In terms of assembly, myosin is a hexamer of 2 heavy chains and 4 light chains. Interacts with MYOC. N-terminus is methylated by METTL11A/NTM1. In terms of processing, phosphorylated by MYLK3 and MYLK2; promotes cardiac muscle contraction and function. Dephosphorylated by PPP1CB complexed to PPP1R12B. The phosphorylated form in adult is expressed as gradients across the heart from endocardium (low phosphorylation) to epicardium (high phosphorylation); regulates cardiac torsion and workload distribution. In terms of tissue distribution, abundantly expressed in both cardiac and slow skeletal muscle. In the adult heart, the phosphorylated form is highly expressed in epicardium and weakly in endocardium.

The protein resides in the cytoplasm. It is found in the myofibril. It localises to the sarcomere. Its subcellular location is the a band. Contractile protein that plays a role in heart development and function. Following phosphorylation, plays a role in cross-bridge cycling kinetics and cardiac muscle contraction by increasing myosin lever arm stiffness and promoting myosin head diffusion; as a consequence of the increase in maximum contraction force and calcium sensitivity of contraction force. These events altogether slow down myosin kinetics and prolong duty cycle resulting in accumulated myosins being cooperatively recruited to actin binding sites to sustain thin filament activation as a means to fine-tune myofilament calcium sensitivity to force. During cardiogenesis plays an early role in cardiac contractility by promoting cardiac myofibril assembly. In Mus musculus (Mouse), this protein is Myosin regulatory light chain 2, ventricular/cardiac muscle isoform.